Consider the following 260-residue polypeptide: Hemin import ATP-binding protein HmuV (260 aa).

Positions 6-242 (LSGRNISMKY…ERIEQVYGYR (237 aa)) constitute an ABC transporter domain. ATP is bound at residue 38-45 (GPNGAGKS).

This sequence belongs to the ABC transporter superfamily. Heme (hemin) importer (TC 3.A.1.14.5) family. As to quaternary structure, the complex is composed of two ATP-binding proteins (HmuV), two transmembrane proteins (HmuU) and a solute-binding protein (HmuT).

It is found in the cell inner membrane. In terms of biological role, part of the ABC transporter complex HmuTUV involved in hemin import. Responsible for energy coupling to the transport system. This is Hemin import ATP-binding protein HmuV from Vibrio parahaemolyticus serotype O3:K6 (strain RIMD 2210633).